Consider the following 336-residue polypeptide: Neuropeptides B/W receptor type 2 (336 aa).

A disordered region spans residues 1 to 25 (MMEATGLEGLESTSSPCPGSTGTGL). Over 1–45 (MMEATGLEGLESTSSPCPGSTGTGLSWDNGTRHNATFPEPLPALY) the chain is Extracellular. The span at 12 to 25 (STSSPCPGSTGTGL) shows a compositional bias: low complexity. Asn29 and Asn34 each carry an N-linked (GlcNAc...) asparagine glycan. Residues 46-68 (VLLPVVYSVICAVGLVGNAAVIC) form a helical membrane-spanning segment. Topologically, residues 69–80 (VILRAPKMKTVT) are cytoplasmic. A helical transmembrane segment spans residues 81 to 103 (HVFILNLAIADGLFTLVLPTNIA). At 104-127 (EHLLQRWPFGEVLCKLVLAIDHCN) the chain is on the extracellular side. A disulfide bridge links Cys117 with Cys197. The chain crosses the membrane as a helical span at residues 128–146 (IFSSVYFLAAMSIDRYLVV). Residues 147–165 (LATARSRRMPRRTVHRAKV) lie on the Cytoplasmic side of the membrane. The chain crosses the membrane as a helical span at residues 166–188 (ASLCVWLGVTVAVLPFLTFAGVY). The Extracellular segment spans residues 189–213 (NNELQVTSCGLSFPRPERAWFQASR). The helical transmembrane segment at 214–236 (IYTLVLGFVVPMCTLCVLYADLL) threads the bilayer. The Cytoplasmic portion of the chain corresponds to 237-256 (RRLRALRLHSGAKALGKAKR). A helical membrane pass occupies residues 257 to 279 (KVSLLVLAVLAVGLLCWTPFHLA). At 280 to 293 (SIVALTTDLPQTPL) the chain is on the extracellular side. Residues 294–316 (VIIVSYVVTSLSYTSSCLNPFLY) form a helical membrane-spanning segment. Over 317-336 (AFLDHSFRKSLRTACRCQGA) the chain is Cytoplasmic.

The protein belongs to the G-protein coupled receptor 1 family.

It is found in the cell membrane. In terms of biological role, interacts specifically with a number of opioid ligands. Receptor for neuropeptides B and W, which may be involved in neuroendocrine system regulation, food intake and the organization of other signals. The sequence is that of Neuropeptides B/W receptor type 2 (NPBWR2) from Bos taurus (Bovine).